The following is a 2135-amino-acid chain: Protein SUBSTANDARD STARCH GRAIN 4, chloroplastic (2135 aa).

2 stretches are compositionally biased toward low complexity: residues 1 to 10 (MSHCLRASPF) and 72 to 84 (QHQP…RQQQ). A chloroplast-targeting transit peptide spans 1–42 (MSHCLRASPFLSPPPPLLHPSRRRRHRQGGCIHTSPGTRPLV). Disordered regions lie at residues 1 to 44 (MSHC…LVAR) and 58 to 89 (SDSS…PPPP). The Stromal segment spans residues 43 to 104 (ARARFDPPPL…ASLAPLWREG (62 aa)). The chain crosses the membrane as a helical span at residues 105-125 (LFLVRCSVFAAALSVAAALSW). At 126 to 2135 (YAQLRARSFV…LFEYSATSQG (2010 aa)) the chain is on the chloroplast intermembrane side. The segment covering 361–370 (RRRYRRKAHS) has biased composition (basic residues). Disordered regions lie at residues 361–382 (RRRY…SSQQ), 401–492 (SGNP…QVSE), and 1843–1869 (FLGS…SFKP). 3 stretches are compositionally biased toward polar residues: residues 373–382 (ISDTDNSSQQ), 454–490 (NFAS…NEQV), and 1846–1856 (SLSTSPDGQQS). Over residues 1857–1866 (ETERTPEHGS) the composition is skewed to basic and acidic residues.

It belongs to the TamB family. Part of the TIC complex, which can interact with components of the TOC complex to form a larger import complex. Highly expressed in third leaf and developing seeds. Expressed in anthers, pistils, flag leaves and young panicles.

Its subcellular location is the plastid. The protein localises to the chloroplast inner membrane. It is found in the chloroplast intermembrane space. The protein resides in the chloroplast. It localises to the amyloplast. Its function is as follows. Part of the inner chloroplast membrane translocon complex (TIC) which associates with the outer chloroplast membrane translocon complex (TOC) and forms a supercomplex involved in protein precursor import into the chloroplast stroma. Required for the regulation of starch granule size in amyloplasts. This is Protein SUBSTANDARD STARCH GRAIN 4, chloroplastic from Oryza sativa subsp. japonica (Rice).